The sequence spans 615 residues: UvrABC system protein C (615 aa).

Residues 14–91 (TSPGCYIHKD…IKENKPKYNI (78 aa)) enclose the GIY-YIG domain. Positions 196 to 231 (NKIIDELKGKMAAAAQTMEFERAAEYRDLIQAIGTL) constitute a UVR domain.

Belongs to the UvrC family. In terms of assembly, interacts with UvrB in an incision complex.

It localises to the cytoplasm. In terms of biological role, the UvrABC repair system catalyzes the recognition and processing of DNA lesions. UvrC both incises the 5' and 3' sides of the lesion. The N-terminal half is responsible for the 3' incision and the C-terminal half is responsible for the 5' incision. This Streptococcus pneumoniae (strain JJA) protein is UvrABC system protein C.